Here is a 340-residue protein sequence, read N- to C-terminus: Ketol-acid reductoisomerase (NADP(+)) (340 aa).

Residues 3-183 (INVYYDKDCD…GGGRTGIIET (181 aa)) enclose the KARI N-terminal Rossmann domain. NADP(+) is bound by residues 26 to 29 (FGSQ), Ser54, and 84 to 87 (DELQ). The active site involves His109. An NADP(+)-binding site is contributed by Gly135. In terms of domain architecture, KARI C-terminal knotted spans 184–329 (TFKDETETDL…KKLRAMMPWI (146 aa)). The Mg(2+) site is built by Asp192, Glu196, Glu228, and Glu232. Residue Ser253 participates in substrate binding.

It belongs to the ketol-acid reductoisomerase family. Mg(2+) serves as cofactor.

It catalyses the reaction (2R)-2,3-dihydroxy-3-methylbutanoate + NADP(+) = (2S)-2-acetolactate + NADPH + H(+). It carries out the reaction (2R,3R)-2,3-dihydroxy-3-methylpentanoate + NADP(+) = (S)-2-ethyl-2-hydroxy-3-oxobutanoate + NADPH + H(+). It participates in amino-acid biosynthesis; L-isoleucine biosynthesis; L-isoleucine from 2-oxobutanoate: step 2/4. Its pathway is amino-acid biosynthesis; L-valine biosynthesis; L-valine from pyruvate: step 2/4. Functionally, involved in the biosynthesis of branched-chain amino acids (BCAA). Catalyzes an alkyl-migration followed by a ketol-acid reduction of (S)-2-acetolactate (S2AL) to yield (R)-2,3-dihydroxy-isovalerate. In the isomerase reaction, S2AL is rearranged via a Mg-dependent methyl migration to produce 3-hydroxy-3-methyl-2-ketobutyrate (HMKB). In the reductase reaction, this 2-ketoacid undergoes a metal-dependent reduction by NADPH to yield (R)-2,3-dihydroxy-isovalerate. The sequence is that of Ketol-acid reductoisomerase (NADP(+)) from Campylobacter concisus (strain 13826).